The sequence spans 109 residues: Nucleoid-associated protein HI_0442 (109 aa).

It belongs to the YbaB/EbfC family. As to quaternary structure, homodimer.

The protein resides in the cytoplasm. It is found in the nucleoid. In terms of biological role, binds to DNA and alters its conformation. May be involved in regulation of gene expression, nucleoid organization and DNA protection. In Haemophilus influenzae (strain ATCC 51907 / DSM 11121 / KW20 / Rd), this protein is Nucleoid-associated protein HI_0442.